Here is a 244-residue protein sequence, read N- to C-terminus: 3-oxoacyl-[acyl-carrier-protein] reductase FabG (244 aa).

NADP(+) contacts are provided by residues 12–15 (GASR), threonine 37, 59–60 (NV), and asparagine 86. Serine 138 serves as a coordination point for substrate. Tyrosine 151 acts as the Proton acceptor in catalysis. Residues 151–155 (YAAAK) and isoleucine 184 contribute to the NADP(+) site.

The protein belongs to the short-chain dehydrogenases/reductases (SDR) family. In terms of assembly, homotetramer.

It catalyses the reaction a (3R)-hydroxyacyl-[ACP] + NADP(+) = a 3-oxoacyl-[ACP] + NADPH + H(+). Its pathway is lipid metabolism; fatty acid biosynthesis. Functionally, catalyzes the NADPH-dependent reduction of beta-ketoacyl-ACP substrates to beta-hydroxyacyl-ACP products, the first reductive step in the elongation cycle of fatty acid biosynthesis. The sequence is that of 3-oxoacyl-[acyl-carrier-protein] reductase FabG (fabG) from Vibrio harveyi (Beneckea harveyi).